Here is a 697-residue protein sequence, read N- to C-terminus: MATSCFPPFSASSSSLCSSQFTPLLSCPRNTQICRKKRPVMASMHSENQKESNVCNRRSILFVGFSVLPLLNLRARALEGLSTDSQAQPQKEETEQTIQGSAGNPFVSLLNGLGVVGSGVLGSLYALARNEKAVSDATIESMKNKLKDKEDAFVSMKKQFESELLSEREDRNKLIRREGEERQALVNQLKSAKTTVISLGQELQNEKKLAEDLKFEIKGLQNDLMNTKEDKKKLQEELKEKLDLIQVLEEKITLLTTEIKDKEVSLRSNTSKLAEKESEVNSLSDMYQQSQDQLMNLTSEIKELKDEIQKRERELELKCVSEDNLNVQLNSLLLERDESKKELHAIQKEYSEFKSNSDEKVASDATLGEQEKRLHQLEEQLGTALSEASKNEVLIADLTREKENLRRMVDAELDNVNKLKQEIEVTQESLENSRSEVSDITVQLEQLRDLSSKLEREVSKLQMELEETRASLQRNIDETKHSSELLAAELTTTKELLKKTNEEMHTMSDELVAVSENRDSLQTELVNVYKKREHTRNELKQEKTIVRTLEEELKFLESQITREKELRKSLEDELEKATESLDEINRNVLALAEELELATSRNSSLEDEREVHRQSVSEQKQISQEAQENLEDAHSLVMKLGKERESLEKRAKKLEDEMAAAKGEILRLRSQINSVKAPVEDEEKVVAGEKEKVNVQQ.

The transit peptide at 1-41 (MATSCFPPFSASSSSLCSSQFTPLLSCPRNTQICRKKRPVM) directs the protein to the chloroplast. A thylakoid-targeting transit peptide spans 42-79 (ASMHSENQKESNVCNRRSILFVGFSVLPLLNLRARALE). The Lumenal, thylakoid portion of the chain corresponds to 80 to 106 (GLSTDSQAQPQKEETEQTIQGSAGNPF). Residues 81–100 (LSTDSQAQPQKEETEQTIQG) form a disordered region. Residues 107 to 127 (VSLLNGLGVVGSGVLGSLYAL) traverse the membrane as a helical segment. The Stromal portion of the chain corresponds to 128-697 (ARNEKAVSDA…GEKEKVNVQQ (570 aa)). Residues 203–671 (LQNEKKLAED…KGEILRLRSQ (469 aa)) are a coiled coil. Residues 599-629 (TSRNSSLEDEREVHRQSVSEQKQISQEAQEN) are disordered. Over residues 604-615 (SLEDEREVHRQS) the composition is skewed to basic and acidic residues. Residues 616-627 (VSEQKQISQEAQ) show a composition bias toward polar residues.

As to quaternary structure, interacts with MAF1. Interacts with PTST2; the interaction is essential for the initiation of starch granules biosynthesis in leaf chloroplasts, for the correct location of the process in the stromal spaces between the thylakoid membranes, and for the association of PTST2 with the thylakoid membranes. Post-translationally, phosphorylated in vitro by human casein kinase II. In terms of processing, predicted to be translocated into the thylakoid by the Tat system.

It localises to the plastid. It is found in the chloroplast. Its subcellular location is the chloroplast thylakoid membrane. The protein localises to the chloroplast stroma. The protein resides in the chloroplast nucleoid. It localises to the nucleus. It is found in the nucleus matrix. Functionally, required for the initiation of starch granules biosynthesis in leaf chloroplasts. Anchored to the thylakoid membranes with its C-terminus facing into the stroma where it is essential for localizing PTST2 and SS4 to the stromal spaces between the thylakoid membranes in order to begin starch granule formation. Associated with leaf chloroplastic nucleoids in vivo. Binds to various chloroplastic double-stranded DNA fragments without particular sequence specificity in vitro. May function at the interface between nucleoids and thylakoids possibly by anchoring nucleoids to the thylakoid membrane system in mature chloroplasts. Binds nuclear DNA. Interacts with chromatin via matrix attachment regions (MARs). Likely to participate in nuclear architecture by connecting chromatin with the nuclear matrix and potentially with the nuclear envelope. The polypeptide is MAR-binding filament-like protein 1 (Solanum lycopersicum (Tomato)).